The following is a 2856-amino-acid chain: MASEDNRAPSRPPTGDDGGGGGKEETPTEGGALSLKPGLPIRGIRMKFAVLTGLVEVGEVSNRDIVETVFNLLVGGQFDLEMNFIIQEGESIMCMVELLEKCDVTCQAEVWSMFTAILKKSIRNLQVCTEVGLVEKVLGKIEKVDSMIADLLVDMLGVLASYNLTVRELKLFFSKLQGDKGQWPPHAGKLLSVLKHMPQKYGPDAFFNFPGKSAAAIALPPIARWPYQNGFTFHTWLRMDPVNNINVDKDKPYLYCFRTSKGLGYSAHFVGGCLIITSIKSKGKGFQHCVKFDFKPQKWYMVTIVHIYNRWKNSELRCYVNGELASYGEITWFVNTSDTFDKCFLGSSETADANRVFCGQMTAVYLFSDALNAAQIFAIYQLGLGYKGTFKFKAESDLFLAEHHKLLLYDGKLSSAIAFMYNPRATDAQLCLESSPKDNPSIFVHSPHALMLQDVKAVLTHSIQSAMHSIGGVQVLFPLFAQLDYKQYLSDEVDLTICTTLLAFIMELLKNSIAMQEQMLACKGFLVIGYSLEKSSKSHVSRAVLELCLAFSKYLSNLQNGMPLLKQLCDHILLNPAVWIHTPAKVQLMLYTYLSTEFIGTVNIYNTIRRVGTVLLIMHTLKYYYWAVNPQDRSGITPKGLDGPRPNQKEILSLRAFLLMFIKQLVMKDSGVKEDELQAILNYLLTMHEDDNLMDVLQLLVALMAEHPNSMIPAFDQRNGLRVIYKLLASKSEGIRVQALKALGYFLKHLAPKRKAEVMLGHGLFSLLAERLMLQTNLITMTMYNVLFEILIEQICTQVIHKQHPDPDSTVKIQNPQILKVIATLLRNSPQCPESMEVRRAFLSDMIKLFNNSRENRRSLLQCSVWQEWMLSLCYFNPKNSDEQKITEMVYAIFRILLYHAVKYEWGGWRVWVDTLSITHSKVTFEIHKENLANIFREEQRKGDEETGPCSSSLVPEGTGATRGVDVSVGSQHEDRKDSPISPHFTRNSDENSSIGRASSIDSASNTELQTHDMSSDEKKVERENQELLDQATVEETATNGAKDDLETSSDAAEPVTINSNSLEPGKDTVTISEVSASISSPSEEDAAEMPELLEKSGVEEKEDDDYVELKVEGSPTEEAGLPTELQGEGLSVAASGGREEPDMCGHGCEVQVEAPITKIHNDPETTDSEDSRFPTVATAGSLATSSEVPVPQATVQSDSHEMLDGGMKATNLAGETESVSDCADNVSEAPATSEQKITKLDVSSVASDTERFELKASTSTEAPQPQRHGLEISRQQEQTAQGTAPDAVDQQRRDSRSTMFRIPEFKWSQMHQRLLTDLLFSIETDIQMWRSHSTKTVMDFVNSSDNVIFVHNTIHLISQVMDNMVMACGGILPLLSAATSATHELENIEPTQGLSIEASVTFLQRLISLVDVLIFASSLGFTEIEAEKNMSSGGILRQCLRLVCAVAVRNCLECQQHSQLKARGDTAKSSKTIHSLIPMGKSAAKSPVDIVTGGISSVRDLDRLPARTWTLIGLRAVVFRDIEDSKQAQFLALAVVYFISVLMVSKYRDILEPQDERHSQSLKETSSDNGNASLPDAENTPAEFSSLTLSSVEESLEGTSCTRRRDSGLGEETASGLGSGLSVASPAAPLGVSAGPDAISEVLCTLSLEVNKSQETRIDGGNELDRKVTPSVPVSKNVNVKDILRSLVNMPADGVTVDPALLPPACLGALGDLSVDPPMQFRSFDRSVIIATKKSSVLPSALTTSAPSSAVSVVSSVDPTHASDTGGESPGSRSPKCKTALSCKQLAPSHKTPAAHMSITERLEHALEKAAPLLREIFVDFAPFLSRTLLGSHGQELLIEGTSLVCMKSSSSVVELVMLLCSQEWQNSIQKNAGLAFIELVNEGRLLSQTMKDHLVRVANEAEFILSRQRAEDIHRHAEFESLCAQYSADKREEEKMCDHLIRAAKYRDHVTATQLIQKIINLLTDKHGAWGSSAVSRPREFWRLDYWEDDLRRRRRFVRNPLGSTHPEATLKTAVEHAADEDILAKGKQSIKSQALGNQNSENEALLEGDDDTLSSVDEKDLENLAGPVSLSTPAQLVAPSVVVKGTLSVTSSELYFEVDEEDPNFKKIDPKILAYTEGLHGKWLFTEIRSIFSRRYLLQNTALEIFMANRVAVMFNFPDPATVKKVVNYLPRVGVGTSFGLPQTRRISLATPRQLFKASNMTQRWQHREISNFEYLMFLNTIAGRSYNDLNQYPVFPWVITNYESEELDLTLPSNFRDLSKPIGALNPKRAAFFAERFESWEDDQVPKFHYGTHYSTASFVLAWLLRIEPFTTYFLNLQGGKFDHADRTFSSVSRAWRNSQRDTSDIKELIPEFYYLPEMFVNFNNYNLGVMDDGTVVSDVELPPWAKTSEEFVRINRLALESEFVSCQLHQWIDLIFGYKQQGPEAVRALNVFYYLTYEGAVNLNSITDPVLREAVEAQIRSFGQTPSQLLIEPHPPRGSAMQASPLMFTDQAQQDVIMVLKFPSNSPVTHVAANTQPGLAMPAVITVTANRLFAVNKWHNLPAHQGAVQDQPYQLPVEIDPLIACGTGTHRRQVTDLLDQSIQVHSQCFVITSDNRYILVCGFWDKSFRVYSTDTGKLIQVVFGHWDVVTCLARSESYIGGNCYILSGSRDATLLLWYWNGKSSGIGDNPGGETATPRAILTGHDYEITCAAVCAELGLVLSGSQEGPCLIHSMNGDLLRTLEGPENCLKPKLIQASREGHCVIFYENGCFCTFSVNGKLQATVETDDHIRAIQLSRDGQYLLTGGDNGVVIVRQVSDLKQLFAYPGCDAGIRAMALSFDQRCIISGMASGSIVLFYNDFNRWHHEYQTRY.

Disordered stretches follow at residues 1–35 and 939–1107; these read MASE…ALSL and EQRK…DDDY. Alanine 2 is modified (N-acetylalanine). 3 positions are modified to phosphoserine: serine 10, serine 979, and serine 1003. The span at 991-1009 shows a compositional bias: polar residues; sequence ENSSIGRASSIDSASNTEL. Residues 1010–1026 are compositionally biased toward basic and acidic residues; it reads QTHDMSSDEKKVERENQ. The span at 1073–1082 shows a compositional bias: low complexity; that stretch reads SEVSASISSP. Phosphoserine is present on residues serine 1097, serine 1132, serine 1136, serine 1219, serine 1221, serine 1228, serine 1244, and serine 1258. The segment at 1253 to 1296 is disordered; that stretch reads FELKASTSTEAPQPQRHGLEISRQQEQTAQGTAPDAVDQQRRDS. Polar residues predominate over residues 1274–1283; it reads SRQQEQTAQG. The WD 1 repeat unit spans residues 1298 to 1340; sequence STMFRIPEFKWSQMHQRLLTDLLFSIETDIQMWRSHSTKTVMD. Phosphoserine is present on residues serine 1487 and serine 1497. Residues 1529 to 1545 form a helical membrane-spanning segment; that stretch reads AQFLALAVVYFISVLMV. Disordered stretches follow at residues 1556 to 1621 and 1750 to 1778; these read DERH…LGSG and SAVS…SPKC. Residues 1563–1573 show a composition bias toward polar residues; the sequence is LKETSSDNGNA. Positions 1586–1601 are enriched in low complexity; that stretch reads SSLTLSSVEESLEGTS. Residues serine 1608, serine 1770, serine 1773, and serine 2057 each carry the phosphoserine modification. One can recognise a BEACH-type PH domain in the interval 2066–2174; it reads NLAGPVSLST…TVKKVVNYLP (109 aa). A BEACH domain is found at 2193 to 2482; sequence ATPRQLFKAS…QLLIEPHPPR (290 aa). Serine 2489 is subject to Phosphoserine. WD repeat units follow at residues 2584 to 2626, 2629 to 2672, 2688 to 2728, 2770 to 2809, and 2812 to 2851; these read DQSI…LIQV, GHWD…SGIG, GHDY…RTLE, ETDD…QLFA, and GCDA…WHHE.

In terms of assembly, interacts with TOM1 and TOLLIP. Isoform 1 is expressed in the brain, is absent from the lung and the bone marrow and is less abundant in the spleen. Isoform 2 is expressed in the spleen, lung, brain and bone marrow. Isoform 3 is expressed in the brain, is absent from the bone marrow and is less abundant in the spleen and lung.

The protein localises to the cell membrane. The protein resides in the endoplasmic reticulum membrane. It localises to the golgi apparatus. It is found in the trans-Golgi network membrane. Its subcellular location is the lysosome membrane. In terms of biological role, involved in coupling signal transduction and vesicle trafficking to enable polarized secretion and/or membrane deposition of immune effector molecules. Involved in phagophore growth during mitophagy by regulating ATG9A trafficking to mitochondria. This Mus musculus (Mouse) protein is Lipopolysaccharide-responsive and beige-like anchor protein (Lrba).